We begin with the raw amino-acid sequence, 2521 residues long: Piezo-type mechanosensitive ion channel component 1 (2521 aa).

Topologically, residues 1 to 12 (MEPHVLGAVLYW) are cytoplasmic. Residues 13–25 (LLLPCALLAACLL) traverse the membrane as a helical segment. Residues 26–28 (RFS) are Extracellular-facing. Residues 29–44 (GLSLVYLLFLLLLPWF) form a helical membrane-spanning segment. The Cytoplasmic segment spans residues 45–58 (PGPTRCGLQGHTGR). The chain crosses the membrane as a helical span at residues 59-81 (LLRALLGLSLLFLVAHLALQICL). The Extracellular portion of the chain corresponds to 82-121 (HIVPRLDQLLGPSCSRWETLSRHIGVTRLDLKDIPNAIRL). A helical transmembrane segment spans residues 122–138 (VAPDLGILVVSSVCLGI). The Cytoplasmic portion of the chain corresponds to 139-194 (CGRLARNTRQSPHPRELDDDERDVDASPTAGLQEAATLAPTRRSRLAARFRVTAHW). The chain crosses the membrane as a helical span at residues 195 to 214 (LLVAAGRVLAVTLLALAGIA). Residues 215–216 (HP) lie on the Extracellular side of the membrane. The chain crosses the membrane as a helical span at residues 217–236 (SALSSVYLLLFLALCTWWAC). Residues 237–247 (HFPISTRGFSR) are Cytoplasmic-facing. The helical transmembrane segment at 248 to 268 (LCVAVGCFGAGHLICLYCYQM) threads the bilayer. At 269–309 (PLAQALLPPAGIWARVLGLKDFVGPTNCSSPHALVLNTGLD) the chain is on the extracellular side. N-linked (GlcNAc...) asparagine glycosylation occurs at Asn295. The helical transmembrane segment at 310–330 (WPVYASPGVLLLLCYATASLR) threads the bilayer. Over 331-417 (KLRAYRPSGQ…EASPLHSLGH (87 aa)) the chain is Cytoplasmic. A helical membrane pass occupies residues 418–438 (LIMDQSYVCALIAMMVWSITY). Topologically, residues 439-440 (HS) are extracellular. The helical transmembrane segment at 441–456 (WLTFVLLLWACLIWTV) threads the bilayer. Residues 457–461 (RSRHQ) lie on the Cytoplasmic side of the membrane. A helical transmembrane segment spans residues 462 to 484 (LAMLCSPCILLYGMTLCCLRYVW). The Extracellular portion of the chain corresponds to 485–512 (AMDLRPELPTTLGPVSLRQLGLEHTRYP). A helical transmembrane segment spans residues 513 to 530 (CLDLGAMLLYTLTFWLLL). The Cytoplasmic portion of the chain corresponds to 531–574 (RQFVKEKLLKWAESPAALTEVTVADTEPTRTQTLLQSLGELVKG). Residues 575–595 (VYAKYWIYVCAGMFIVVSFAG) form a helical membrane-spanning segment. Residue Arg596 is a topological domain, extracellular. A helical membrane pass occupies residues 597–617 (LVVYKIVYMFLFLLCLTLFQV). Residues 618–627 (YYSLWRKLLK) lie on the Cytoplasmic side of the membrane. The helical transmembrane segment at 628–649 (AFWWLVVAYTMLVLIAVYTFQF) threads the bilayer. Topologically, residues 650–679 (QDFPAYWRNLTGFTDEQLGDLGLEQFSVSE) are extracellular. The helical transmembrane segment at 680-696 (LFSSILVPGFFLLACIL) threads the bilayer. The Cytoplasmic segment spans residues 697–816 (QLHYFHRPFM…RRLLELHVFK (120 aa)). Position 734 is a phosphothreonine (Thr734). A disordered region spans residues 738-769 (REEQQEHQQQQQEEEEEEEDSRDEGLGVATPH). Acidic residues predominate over residues 749-759 (QEEEEEEEDSR). Ser758 carries the phosphoserine modification. The helical transmembrane segment at 817 to 828 (LVALYTVWVALK) threads the bilayer. Residues 829–831 (EVS) lie on the Extracellular side of the membrane. Residues 832 to 845 (VMNLLLVVLWAFAL) form a helical membrane-spanning segment. The Cytoplasmic segment spans residues 846-859 (PYPRFRPMASCLST). The helical transmembrane segment at 860–874 (VWTCVIIVCKMLYQL) threads the bilayer. Over 875-926 (KVVNPQEYSSNCTEPFPNSTNLLPTEISQSLLYRGPVDPANWFGVRKGFPNL) the chain is Extracellular. Residues 927–954 (GYIQNHLQVLLLLVFEAIVYRRQEHYRR) form a helical membrane-spanning segment. The Cytoplasmic portion of the chain corresponds to 955–994 (QHQLAPLPAQAVFASGTRQQLDQDLLGCLKYFINFFFYKF). The helical transmembrane segment at 995–1010 (GLEICFLMAVNVIGQR) threads the bilayer. Residues 1011-1012 (MN) lie on the Extracellular side of the membrane. The chain crosses the membrane as a helical span at residues 1013-1028 (FLVTLHGCWLVAILTR). At 1029 to 1041 (RHRQAIARLWPNY) the chain is on the cytoplasmic side. Residues 1042-1057 (CLFLALFLLYQYLLCL) form a helical membrane-spanning segment. Over 1058–1096 (GMPPALCIDYPWRWSRAVPMNSALIKWLYLPDFFRAPNS) the chain is Extracellular. A helical transmembrane segment spans residues 1097–1118 (TNLISDFLLLLCASQQWQVFSA). The Cytoplasmic segment spans residues 1119 to 1153 (ERTEEWQRMAGVNTDRLEPLRGEPNPVPNFIHCRS). A helical transmembrane segment spans residues 1154-1180 (YLDMLKVAVFRYLFWLVLVVVFVTGAT). At 1181–1185 (RISIF) the chain is on the extracellular side. A helical membrane pass occupies residues 1186–1204 (GLGYLLACFYLLLFGTALL). The Cytoplasmic portion of the chain corresponds to 1205–1217 (QRDTRARLVLWDC). Residues 1218–1236 (LILYNVTVIISKNMLSLLA) form a helical membrane-spanning segment. Over 1237 to 1285 (CVFVEQMQTGFCWVIQLFSLVCTVKGYYDPKEMMDRDQDCLLPVEEAGI) the chain is Extracellular. The chain crosses the membrane as a helical span at residues 1286–1302 (IWDSVCFFFLLLQRRVF). At 1303 to 1656 (LSHYYLHVRA…ELLLDRRLRI (354 aa)) the chain is on the cytoplasmic side. A coiled-coil region spans residues 1339-1368 (HRRIEEKSLAQLKRQMERIRAKQEKHRQGR). 3 disordered regions span residues 1356–1402 (RIRA…RRQW), 1462–1498 (RQQE…EAAA), and 1576–1630 (TLPG…DPGE). The segment covering 1385 to 1398 (LEPGPDSPGGSSPP) has biased composition (low complexity). Phosphoserine occurs at positions 1391 and 1396. Phosphoserine is present on residues Ser1636 and Ser1646. Residues 1657–1700 (PELEEAELFAEGQGRALRLLRAVYQCVAAHSELLCYFIIILNHM) form a helical membrane-spanning segment. Residues 1701-1704 (VTAS) lie on the Extracellular side of the membrane. Residues 1705–1720 (AGSLVLPVLVFLWAML) form a helical membrane-spanning segment. Topologically, residues 1721 to 1728 (SIPRPSKR) are cytoplasmic. Residues 1729–1747 (FWMTAIVFTEIAVVVKYLF) form a helical membrane-spanning segment. At 1748 to 1779 (QFGFFPWNSHVVLRRYENKPYFPPRILGLEKT) the chain is on the extracellular side. A helical membrane pass occupies residues 1780–1801 (DGYIKYDLVQLMALFFHRSQLL). The Cytoplasmic segment spans residues 1802 to 1960 (CYGLWDHEED…HTKYRAATDV (159 aa)). Residues 1811-1822 (DSPSKEHDKSGE) are compositionally biased toward basic and acidic residues. The disordered stretch occupies residues 1811–1921 (DSPSKEHDKS…RPSRSGGRVR (111 aa)). Phosphothreonine is present on Thr1854. Over residues 1859-1868 (VELRPRDTRR) the composition is skewed to basic and acidic residues. Residues 1869 to 1878 (ISLRFRRRKK) show a composition bias toward basic residues. Acidic residues predominate over residues 1890–1903 (EAEDREEEEGEEEK). Over residues 1904 to 1913 (EAPTGREKRP) the composition is skewed to basic and acidic residues. A helical transmembrane segment spans residues 1961–1980 (YALMFLADVVDFIIIIFGFW). The Extracellular portion of the chain corresponds to 1981–2000 (AFGKHSAATDITSSLSDDQV). Residues 2001–2017 (PEAFLVMLLIQFSTMVV) form a helical membrane-spanning segment. Residues 2018 to 2031 (DRALYLRKTVLGKL) are Cytoplasmic-facing. The chain crosses the membrane as a helical span at residues 2032–2052 (AFQVALVLAIHLWMFFILPAV). Residues 2053-2060 (TERMFNQN) lie on the Extracellular side of the membrane. Residues 2061-2076 (VVAQLWYFVKCIYFAL) traverse the membrane as a helical segment. Topologically, residues 2077-2176 (SAYQIRCGYP…KKKIVKYGMG (100 aa)) are cytoplasmic. Residues 2177–2197 (GLIILFLIAIIWFPLLFMSLV) traverse the membrane as a helical segment. The Extracellular portion of the chain corresponds to 2198-2431 (RSVVGVVNQP…IFSDKVSPPS (234 aa)). Asn2294 carries an N-linked (GlcNAc...) asparagine glycan. Cys2411 and Cys2415 form a disulfide bridge. Residues 2432–2452 (LGFLAGYGIMGLYVSIVLVIG) traverse the membrane as a helical segment. Over 2453 to 2521 (KFVRGFFSEI…TMIKWTREKE (69 aa)) the chain is Cytoplasmic.

The protein belongs to the PIEZO (TC 1.A.75) family. As to quaternary structure, homotrimer; the homotrimer forms a propeller-shaped Piezo channel with a cation-ion conducting pore. Heterotrimeric interaction may occur between PIEZO1 and PIEZO2. Interacts with PKD2. Interacts with STOML3. Interacts with TMC1, TMC2, PCDH15 and CIB2; the interaction may be part of the MET complex. Interacts with MDFIC (via C-terminus); the interaction prolongs Piezo channel inactivation. Interacts with MDFI (via C-terminus); the interaction prolongs Piezo channel inactivation. As to expression, expressed in numerous tissues. In normal brain, expressed exclusively in neurons, not in astrocytes. In Alzheimer disease brains, expressed in about half of the activated astrocytes located around classical senile plaques. In Parkinson disease substantia nigra, not detected in melanin-containing neurons nor in activated astrocytes. Expressed in erythrocytes (at protein level). Expressed in myoblasts (at protein level).

It localises to the endoplasmic reticulum membrane. Its subcellular location is the endoplasmic reticulum-Golgi intermediate compartment membrane. The protein resides in the cell membrane. The protein localises to the cell projection. It is found in the lamellipodium membrane. It carries out the reaction K(+)(in) = K(+)(out). The catalysed reaction is Na(+)(in) = Na(+)(out). The enzyme catalyses Ca(2+)(in) = Ca(2+)(out). It catalyses the reaction Mg(2+)(in) = Mg(2+)(out). Its activity is regulated as follows. Regulated by auxillary subunits MDFIC and MDFI. Down-regulated by phosphatidylserines exposed on the cell surface. Divalent ions decrease the single-channel permeability of K(+). In terms of biological role, pore-forming subunit of the mechanosensitive non-specific cation Piezo channel required for rapidly adapting mechanically activated (MA) currents and has a key role in sensing touch and tactile pain. Piezo channels are homotrimeric three-blade propeller-shaped structures that utilize a cap-motion and plug-and-latch mechanism to gate their ion-conducting pathways. Generates currents characterized by a linear current-voltage relationship that are sensitive to ruthenium red and gadolinium. Conductance to monovalent alkali ions is highest for K(+), intermediate for Na(+) and lowest for Li(+). Divalent ions except for Mn(2+) permeate the channel but more slowly than the monovalent ions and they also reduce K(+) currents. Plays a key role in epithelial cell adhesion by maintaining integrin activation through R-Ras recruitment to the ER, most probably in its activated state, and subsequent stimulation of calpain signaling. In inner ear hair cells, PIEZO1/2 subunits may constitute part of the mechanotransducer (MET) non-selective cation channel complex where they may act as pore-forming ion-conducting component in the complex. In the kidney, may contribute to the detection of intraluminal pressure changes and to urine flow sensing. Acts as a shear-stress sensor that promotes endothelial cell organization and alignment in the direction of blood flow through calpain activation. Plays a key role in blood vessel formation and vascular structure in both development and adult physiology. Acts as a sensor of phosphatidylserine (PS) flipping at the plasma membrane and governs morphogenesis of muscle cells. In myoblasts, flippase-mediated PS enrichment at the inner leaflet of plasma membrane triggers channel activation and Ca2+ influx followed by Rho GTPases signal transduction, leading to assembly of cortical actomyosin fibers and myotube formation. This chain is Piezo-type mechanosensitive ion channel component 1, found in Homo sapiens (Human).